The primary structure comprises 155 residues: Small ribosomal subunit protein bS6 (155 aa).

The interval 94–155 (EEHETEPSAM…RDDNSDGGQE (62 aa)) is disordered. Over residues 107–149 (RGDRGDRGDRRGGDRFGDRDRGDRGDRGSSRFGDRERPRRDDN) the composition is skewed to basic and acidic residues.

It belongs to the bacterial ribosomal protein bS6 family.

Functionally, binds together with bS18 to 16S ribosomal RNA. The sequence is that of Small ribosomal subunit protein bS6 from Parvibaculum lavamentivorans (strain DS-1 / DSM 13023 / NCIMB 13966).